A 235-amino-acid chain; its full sequence is Putative N-acetylmannosamine-6-phosphate 2-epimerase (235 aa).

The protein belongs to the NanE family.

The enzyme catalyses an N-acyl-D-glucosamine 6-phosphate = an N-acyl-D-mannosamine 6-phosphate. It functions in the pathway amino-sugar metabolism; N-acetylneuraminate degradation; D-fructose 6-phosphate from N-acetylneuraminate: step 3/5. Its function is as follows. Converts N-acetylmannosamine-6-phosphate (ManNAc-6-P) to N-acetylglucosamine-6-phosphate (GlcNAc-6-P). This chain is Putative N-acetylmannosamine-6-phosphate 2-epimerase, found in Edwardsiella ictaluri (strain 93-146).